Reading from the N-terminus, the 62-residue chain is Large ribosomal subunit protein bL32 (62 aa).

Basic residues predominate over residues 1 to 19 (MPNPKRRHSKARTGNRRAH). The disordered stretch occupies residues 1 to 23 (MPNPKRRHSKARTGNRRAHDHLS).

The protein belongs to the bacterial ribosomal protein bL32 family.

The sequence is that of Large ribosomal subunit protein bL32 from Koribacter versatilis (strain Ellin345).